Here is a 683-residue protein sequence, read N- to C-terminus: Synaptic vesicle glycoprotein 2B (683 aa).

Basic and acidic residues predominate over residues 1 to 10 (MDDYRYRDNY). Positions 1 to 72 (MDDYRYRDNY…QTKMAPSRAD (72 aa)) are disordered. The Cytoplasmic segment spans residues 1-110 (MDDYRYRDNY…ECGHGRFQWT (110 aa)). S33 carries the post-translational modification Phosphoserine. T36 carries the post-translational modification Phosphothreonine. The chain crosses the membrane as a helical span at residues 111-131 (LFFVLVLALMADGVEVFVVSF). Topologically, residues 132-148 (ALPSAEKDMCLSSSKKG) are extracellular. The chain crosses the membrane as a helical span at residues 149 to 169 (MLGLIVYLGMMAGAFILGGLA). Topologically, residues 170-182 (DKLGRKKVLSMSL) are cytoplasmic. A helical transmembrane segment spans residues 183–203 (AINASFASLSSFVQGYGAFLF). Over 204-205 (CR) the chain is Extracellular. Residues 206 to 226 (LISGIGIGGSLPIVFAYFSEF) traverse the membrane as a helical segment. Residues 227–237 (LSREKRGEHLS) are Cytoplasmic-facing. Residues 238–258 (WLGIFWMTGGIYASAMAWSII) form a helical membrane-spanning segment. The Extracellular portion of the chain corresponds to 259 to 277 (PHYGWGFSMGTNYHFHSWR). A helical membrane pass occupies residues 278 to 298 (VFVIVCALPATVSMVALKFMP). Over 299–390 (ESPRFLLEMG…CVMGPYRMNT (92 aa)) the chain is Cytoplasmic. The helical transmembrane segment at 391–411 (LILAVVWFTMALSYYGLTVWF) threads the bilayer. The Extracellular portion of the chain corresponds to 412 to 535 (PDMIRYFQDE…CHMDFEEDND (124 aa)). Position 423 is a phosphotyrosine (Y423). 3 N-linked (GlcNAc...) asparagine glycosylation sites follow: N441, N491, and N516. Residues 536–556 (FLIYLVSFLGSLSVLPGNIIS) form a helical membrane-spanning segment. Topologically, residues 557–565 (ALLMDRIGR) are cytoplasmic. The chain crosses the membrane as a helical span at residues 566-586 (LKMIGGSMLISAVCCFFLFFG). Residues 587-592 (NSESAM) lie on the Extracellular side of the membrane. A helical membrane pass occupies residues 593–613 (IGWQCLFCGTSIAAWNALDVI). The Cytoplasmic portion of the chain corresponds to 614-626 (TVELYPTNQRATA). The helical transmembrane segment at 627 to 649 (FGILNGLCKLGAILGNTIFASFV) threads the bilayer. The Extracellular segment spans residues 650-653 (GITK). A helical membrane pass occupies residues 654–672 (VVPILLAAASLVGGGLVAL). Over 673–683 (RLPETREQVLM) the chain is Cytoplasmic.

Belongs to the major facilitator superfamily. Interacts with SYT1 in a calcium-independent manner. Forms a complex with SYT1, syntaxin-1 and SNAP25. In terms of assembly, (Microbial infection) Interacts with C.botulinum neurotoxin type A1 and type A2 (BoNT/A, botA). Interaction is improved by glycosylation of SV2. As to quaternary structure, (Microbial infection) Interacts with C.botulinum neurotoxin type D (BoNT/D, botD). (Microbial infection) Interacts with C.botulinum neurotoxin type E (BoNT/E). Interaction requires glycosylation of SV2 proteins. In terms of assembly, (Microbial infection) Interacts with C.botulinum neurotoxin type F (BoNT/F). Interaction requires glycosylation of SV2 proteins. Post-translationally, N-glycosylated. The N-terminal cytoplasmic domain is phosphorylated by CK1. Widely expressed throughout the brain. Specifically expressed by pinealocytes in the pineal gland. Also detected in testis (at protein level). Specifically expressed in neural tissues. Expressed in the spinal cord and in all brain regions with a stronger expression in hippocampus and cortex.

Its subcellular location is the cytoplasmic vesicle. The protein resides in the secretory vesicle. The protein localises to the synaptic vesicle membrane. It localises to the acrosome. In terms of biological role, probably plays a role in the control of regulated secretion in neural and endocrine cells. Functionally, (Microbial infection) Receptor for C.botulinum neurotoxin type A (BoNT/A, botA); the toxin binds via extracellular loop 4. Restores uptake of BoNT/A in mouse and rat cells that are deleted for SV2 receptor. Glycosylation of SV2B is not essential for receptor activity, but enhances the interaction. Also serves as a receptor for the closely related C.botulinum neurotoxin type A2; glycosylation is not essential but enhances the interaction. Its function is as follows. (Microbial infection) Possible receptor for C.botulinum neurotoxin type D (BoNT/D, botD); BoNT/D does not bind to extracellular loop 4 as do BoNT/A and BoNT/E. Another group does not find a convincing interaction with SV2. (Microbial infection) Receptor for C.botulinum neurotoxin type E (BoNT/E); the toxin probably binds via extracellular loop 4. Restores uptake of BoNT/E in mouse cells that are deleted for SV2 receptor. Glycosylation of SV2B is not essential for receptor activity, but enhances the interaction. In terms of biological role, (Microbial infection) Receptor for C.botulinum neurotoxin type F (BoNT/F); binding requires glycosylation of this protein. The polypeptide is Synaptic vesicle glycoprotein 2B (Sv2b) (Rattus norvegicus (Rat)).